Here is a 213-residue protein sequence, read N- to C-terminus: Pyridoxine/pyridoxamine 5'-phosphate oxidase (213 aa).

Residues 8 to 11 and Lys66 contribute to the substrate site; that span reads RKNY. Residues 61–66, 76–77, Arg82, Lys83, and Gln105 each bind FMN; these read RIVLIK and FT. Substrate is bound by residues Tyr123, Arg127, and Ser131. Residues 140-141 and Trp184 each bind FMN; that span reads QS. 190-192 is a substrate binding site; that stretch reads RLH. FMN is bound at residue Arg194.

This sequence belongs to the pyridoxamine 5'-phosphate oxidase family. In terms of assembly, homodimer. Requires FMN as cofactor.

The enzyme catalyses pyridoxamine 5'-phosphate + O2 + H2O = pyridoxal 5'-phosphate + H2O2 + NH4(+). The catalysed reaction is pyridoxine 5'-phosphate + O2 = pyridoxal 5'-phosphate + H2O2. Its pathway is cofactor metabolism; pyridoxal 5'-phosphate salvage; pyridoxal 5'-phosphate from pyridoxamine 5'-phosphate: step 1/1. The protein operates within cofactor metabolism; pyridoxal 5'-phosphate salvage; pyridoxal 5'-phosphate from pyridoxine 5'-phosphate: step 1/1. In terms of biological role, catalyzes the oxidation of either pyridoxine 5'-phosphate (PNP) or pyridoxamine 5'-phosphate (PMP) into pyridoxal 5'-phosphate (PLP). In Paraburkholderia phytofirmans (strain DSM 17436 / LMG 22146 / PsJN) (Burkholderia phytofirmans), this protein is Pyridoxine/pyridoxamine 5'-phosphate oxidase.